A 331-amino-acid polypeptide reads, in one-letter code: Ketol-acid reductoisomerase (NADP(+)) (331 aa).

Residues 2–182 (AQLFYDTDAD…GGTRAGILET (181 aa)) form the KARI N-terminal Rossmann domain. NADP(+)-binding positions include 25 to 28 (YGSQ), serine 51, serine 53, and 83 to 86 (DEFQ). Residue histidine 108 is part of the active site. Glycine 134 contributes to the NADP(+) binding site. Positions 183–328 (NFKEETETDL…KGLRSMFSWL (146 aa)) constitute a KARI C-terminal knotted domain. 4 residues coordinate Mg(2+): aspartate 191, glutamate 195, glutamate 227, and glutamate 231. Serine 252 provides a ligand contact to substrate.

This sequence belongs to the ketol-acid reductoisomerase family. Mg(2+) serves as cofactor.

The catalysed reaction is (2R)-2,3-dihydroxy-3-methylbutanoate + NADP(+) = (2S)-2-acetolactate + NADPH + H(+). It carries out the reaction (2R,3R)-2,3-dihydroxy-3-methylpentanoate + NADP(+) = (S)-2-ethyl-2-hydroxy-3-oxobutanoate + NADPH + H(+). It functions in the pathway amino-acid biosynthesis; L-isoleucine biosynthesis; L-isoleucine from 2-oxobutanoate: step 2/4. Its pathway is amino-acid biosynthesis; L-valine biosynthesis; L-valine from pyruvate: step 2/4. In terms of biological role, involved in the biosynthesis of branched-chain amino acids (BCAA). Catalyzes an alkyl-migration followed by a ketol-acid reduction of (S)-2-acetolactate (S2AL) to yield (R)-2,3-dihydroxy-isovalerate. In the isomerase reaction, S2AL is rearranged via a Mg-dependent methyl migration to produce 3-hydroxy-3-methyl-2-ketobutyrate (HMKB). In the reductase reaction, this 2-ketoacid undergoes a metal-dependent reduction by NADPH to yield (R)-2,3-dihydroxy-isovalerate. The polypeptide is Ketol-acid reductoisomerase (NADP(+)) (Synechococcus sp. (strain WH7803)).